Here is a 545-residue protein sequence, read N- to C-terminus: MPASFSIAGRLVDLHARAIRPATVHVQDGVIARIEPAETVPERHLLPGFIDAHVHVESAMLPPSEFARAAVRHGTVGTVSDPHEIANVLGVEGVEYMIADGRPVPFHFAFGAPSCVPATPFETSGAELGPDAVSALLDRDDVPYLSEMMDYPGAIDGAPNVLAKIRAAQVRDKPVDGHAPGLRGDDVAQYAAAGIETDHECVSIEEAREKLEAGMKIAIREGSAAKNFDELIPLMDEAPDRLMFCSDDRHPDALAEGHIDTLVRRALNRGYDRFDVLRAACVHPVEHYGLDVGLLREGDPADFIVVDDLDALNVQETYVEGALVAEEGETHIEHVASDVVNRFDAEPVAPADFRVPAGGDRLRVITAVDNQLGTGEEVVTTPTDDGYAVADPDRDVLKLAVVNRYTEESTPAVAFVRGFGLDGGALASSVAHDSHNVVAVGARDDALARAVNAVVRAEGGISAAAEGTQVLPLPIAGLMSDEPYDVVARRYTRLTDYVRAELGSAMDAPFMTLSFLSLLVIPQLKLSDRGLFDGAAFEFVDRFVD.

This sequence belongs to the metallo-dependent hydrolases superfamily. Adenine deaminase family. It depends on Mn(2+) as a cofactor.

The catalysed reaction is adenine + H2O + H(+) = hypoxanthine + NH4(+). This chain is Adenine deaminase, found in Salinibacter ruber (strain DSM 13855 / M31).